The following is a 135-amino-acid chain: Flagellar assembly factor FliW 1 (135 aa).

It belongs to the FliW family. Interacts with translational regulator CsrA and flagellin(s).

Its subcellular location is the cytoplasm. Acts as an anti-CsrA protein, binds CsrA and prevents it from repressing translation of its target genes, one of which is flagellin. Binds to flagellin and participates in the assembly of the flagellum. This chain is Flagellar assembly factor FliW 1, found in Helicobacter pylori (strain ATCC 700392 / 26695) (Campylobacter pylori).